Here is a 174-residue protein sequence, read N- to C-terminus: RNA pyrophosphohydrolase (174 aa).

A Nudix hydrolase domain is found at 6–150; that stretch reads GFRPNVGIVI…KREVYRRVMK (145 aa). The Nudix box motif lies at 38-59; the sequence is GGVDDGETPEQAMFRELYEEIG.

It belongs to the Nudix hydrolase family. RppH subfamily. A divalent metal cation serves as cofactor.

Its function is as follows. Accelerates the degradation of transcripts by removing pyrophosphate from the 5'-end of triphosphorylated RNA, leading to a more labile monophosphorylated state that can stimulate subsequent ribonuclease cleavage. The chain is RNA pyrophosphohydrolase from Tolumonas auensis (strain DSM 9187 / NBRC 110442 / TA 4).